The following is a 445-amino-acid chain: Glutamate-1-semialdehyde 2,1-aminomutase (445 aa).

Lys-263 carries the N6-(pyridoxal phosphate)lysine modification.

This sequence belongs to the class-III pyridoxal-phosphate-dependent aminotransferase family. HemL subfamily. Pyridoxal 5'-phosphate serves as cofactor.

It localises to the cytoplasm. It carries out the reaction (S)-4-amino-5-oxopentanoate = 5-aminolevulinate. The protein operates within porphyrin-containing compound metabolism; protoporphyrin-IX biosynthesis; 5-aminolevulinate from L-glutamyl-tRNA(Glu): step 2/2. This Halorubrum lacusprofundi (strain ATCC 49239 / DSM 5036 / JCM 8891 / ACAM 34) protein is Glutamate-1-semialdehyde 2,1-aminomutase.